The primary structure comprises 283 residues: Protein/nucleic acid deglycase HchA (283 aa).

Residues histidine 86, glutamate 91, and histidine 123 each contribute to the Zn(2+) site. Cysteine 185 serves as the catalytic Nucleophile.

It belongs to the peptidase C56 family. HchA subfamily. As to quaternary structure, homodimer.

It is found in the cytoplasm. It catalyses the reaction N(omega)-(1-hydroxy-2-oxopropyl)-L-arginyl-[protein] + H2O = lactate + L-arginyl-[protein] + H(+). It carries out the reaction N(6)-(1-hydroxy-2-oxopropyl)-L-lysyl-[protein] + H2O = lactate + L-lysyl-[protein] + H(+). The catalysed reaction is S-(1-hydroxy-2-oxopropyl)-L-cysteinyl-[protein] + H2O = lactate + L-cysteinyl-[protein] + H(+). The enzyme catalyses N(omega)-(1-hydroxy-2-oxoethyl)-L-arginyl-[protein] + H2O = L-arginyl-[protein] + glycolate + H(+). It catalyses the reaction N(6)-(1-hydroxy-2-oxoethyl)-L-lysyl-[protein] + H2O = glycolate + L-lysyl-[protein] + H(+). It carries out the reaction S-(1-hydroxy-2-oxoethyl)-L-cysteinyl-[protein] + H2O = glycolate + L-cysteinyl-[protein] + H(+). The catalysed reaction is N(2)-(1-hydroxy-2-oxopropyl)-dGTP + H2O = lactate + dGTP + H(+). The enzyme catalyses N(2)-(1-hydroxy-2-oxopropyl)-GTP + H2O = lactate + GTP + H(+). It catalyses the reaction N(2)-(1-hydroxy-2-oxopropyl)-GDP + H2O = lactate + GDP + H(+). It carries out the reaction N(2)-(1-hydroxy-2-oxopropyl)-GMP + H2O = lactate + GMP + H(+). The catalysed reaction is N(2)-(1-hydroxy-2-oxoethyl)-dGTP + H2O = dGTP + glycolate + H(+). The enzyme catalyses N(2)-(1-hydroxy-2-oxoethyl)-GTP + H2O = glycolate + GTP + H(+). It catalyses the reaction N(2)-(1-hydroxy-2-oxoethyl)-GDP + H2O = glycolate + GDP + H(+). It carries out the reaction N(2)-(1-hydroxy-2-oxoethyl)-GMP + H2O = glycolate + GMP + H(+). The catalysed reaction is an N(2)-(1-hydroxy-2-oxopropyl)-guanosine in RNA + H2O = a guanosine in RNA + lactate + H(+). The enzyme catalyses an N(2)-(1-hydroxy-2-oxopropyl)-2'-deoxyguanosine in DNA + H2O = a 2'-deoxyguanosine in DNA + lactate + H(+). It catalyses the reaction an N(2)-(1-hydroxy-2-oxoethyl)-guanosine in RNA + H2O = a guanosine in RNA + glycolate + H(+). It carries out the reaction an N(2)-(1-hydroxy-2-oxoethyl)-2'-deoxyguanosine in DNA + H2O = a 2'-deoxyguanosine in DNA + glycolate + H(+). Its function is as follows. Protein and nucleotide deglycase that catalyzes the deglycation of the Maillard adducts formed between amino groups of proteins or nucleotides and reactive carbonyl groups of glyoxals. Thus, functions as a protein deglycase that repairs methylglyoxal- and glyoxal-glycated proteins, and releases repaired proteins and lactate or glycolate, respectively. Deglycates cysteine, arginine and lysine residues in proteins, and thus reactivates these proteins by reversing glycation by glyoxals. Acts on early glycation intermediates (hemithioacetals and aminocarbinols), preventing the formation of Schiff bases and advanced glycation endproducts (AGE). Also functions as a nucleotide deglycase able to repair glycated guanine in the free nucleotide pool (GTP, GDP, GMP, dGTP) and in DNA and RNA. Is thus involved in a major nucleotide repair system named guanine glycation repair (GG repair), dedicated to reversing methylglyoxal and glyoxal damage via nucleotide sanitization and direct nucleic acid repair. Plays an important role in protecting cells from carbonyl stress. The sequence is that of Protein/nucleic acid deglycase HchA from Escherichia coli (strain K12 / MC4100 / BW2952).